The primary structure comprises 109 residues: UPF0060 membrane protein PSPA7_1846 (109 aa).

The next 4 membrane-spanning stretches (helical) occupy residues 5–25 (LWFV…YLWL), 27–47 (LGKS…FALL), 59–79 (AYAA…AFVE), and 84–104 (LWSD…VLFG).

Belongs to the UPF0060 family.

The protein localises to the cell inner membrane. This Pseudomonas paraeruginosa (strain DSM 24068 / PA7) (Pseudomonas aeruginosa (strain PA7)) protein is UPF0060 membrane protein PSPA7_1846.